The sequence spans 282 residues: Phosphatidylserine decarboxylase proenzyme (282 aa).

Active-site charge relay system; for autoendoproteolytic cleavage activity residues include aspartate 85, histidine 142, and serine 244. Serine 244 serves as the catalytic Schiff-base intermediate with substrate; via pyruvic acid; for decarboxylase activity. Serine 244 is modified (pyruvic acid (Ser); by autocatalysis).

This sequence belongs to the phosphatidylserine decarboxylase family. PSD-B subfamily. Prokaryotic type I sub-subfamily. In terms of assembly, heterodimer of a large membrane-associated beta subunit and a small pyruvoyl-containing alpha subunit. Pyruvate is required as a cofactor. Post-translationally, is synthesized initially as an inactive proenzyme. Formation of the active enzyme involves a self-maturation process in which the active site pyruvoyl group is generated from an internal serine residue via an autocatalytic post-translational modification. Two non-identical subunits are generated from the proenzyme in this reaction, and the pyruvate is formed at the N-terminus of the alpha chain, which is derived from the carboxyl end of the proenzyme. The autoendoproteolytic cleavage occurs by a canonical serine protease mechanism, in which the side chain hydroxyl group of the serine supplies its oxygen atom to form the C-terminus of the beta chain, while the remainder of the serine residue undergoes an oxidative deamination to produce ammonia and the pyruvoyl prosthetic group on the alpha chain. During this reaction, the Ser that is part of the protease active site of the proenzyme becomes the pyruvoyl prosthetic group, which constitutes an essential element of the active site of the mature decarboxylase.

The protein resides in the cell membrane. The catalysed reaction is a 1,2-diacyl-sn-glycero-3-phospho-L-serine + H(+) = a 1,2-diacyl-sn-glycero-3-phosphoethanolamine + CO2. It functions in the pathway phospholipid metabolism; phosphatidylethanolamine biosynthesis; phosphatidylethanolamine from CDP-diacylglycerol: step 2/2. Functionally, catalyzes the formation of phosphatidylethanolamine (PtdEtn) from phosphatidylserine (PtdSer). The chain is Phosphatidylserine decarboxylase proenzyme from Coxiella burnetii (strain CbuG_Q212) (Coxiella burnetii (strain Q212)).